Consider the following 139-residue polypeptide: uncharacterized protein (139 aa).

This is an uncharacterized protein from Dictyostelium discoideum (Social amoeba).